The chain runs to 189 residues: Probable nicotinate-nucleotide adenylyltransferase (189 aa).

This sequence belongs to the NadD family.

It catalyses the reaction nicotinate beta-D-ribonucleotide + ATP + H(+) = deamido-NAD(+) + diphosphate. Its pathway is cofactor biosynthesis; NAD(+) biosynthesis; deamido-NAD(+) from nicotinate D-ribonucleotide: step 1/1. Its function is as follows. Catalyzes the reversible adenylation of nicotinate mononucleotide (NaMN) to nicotinic acid adenine dinucleotide (NaAD). In Staphylococcus aureus (strain USA300 / TCH1516), this protein is Probable nicotinate-nucleotide adenylyltransferase.